A 249-amino-acid chain; its full sequence is Protein twisted gastrulation (249 aa).

The first 23 residues, 1–23, serve as a signal peptide directing secretion; sequence MQLLCYFVILFVGIAPWSSLAND. An N-linked (GlcNAc...) asparagine glycan is attached at asparagine 199.

It belongs to the twisted gastrulation protein family. Component of a complex composed of dpp, sog and tsg. First appears in stage 4 embryos, expressed in two domains: a broad mid-dorsal saddle and an anterior cap, expression between the domains is continuous across the dorsal midline. At stage 5, expression is refined into 4 graded stripes in the mid-dorsal region and a paired domain in the anterior region. During stages 7 and 8, anterior expression fades and the mid dorsal stripes are located between the anterior and posterior transverse furrow (ATF and PTF). Expressing cells become incorporated into the deepening PTF.

It localises to the secreted. Involved in dorsal-ventral patterning. Required for specification of a narrow strip of dorsal midline cells that will give rise to the amnioserosa, but not for specification of dorsal ectoderm cells. Inhibits BMP signaling; enhances the binding of sog to dpp, thus enhancing the antagonistic activity of sog. This Drosophila melanogaster (Fruit fly) protein is Protein twisted gastrulation (tsg).